The primary structure comprises 325 residues: Ribosomal RNA small subunit methyltransferase H (325 aa).

S-adenosyl-L-methionine-binding positions include 38-40, Asp-55, Phe-82, Asp-103, and Gln-110; that span reads GGY. Disordered stretches follow at residues 256–275 and 281–307; these read SGGD…AARA and PARK…RSAV.

This sequence belongs to the methyltransferase superfamily. RsmH family.

It is found in the cytoplasm. It carries out the reaction cytidine(1402) in 16S rRNA + S-adenosyl-L-methionine = N(4)-methylcytidine(1402) in 16S rRNA + S-adenosyl-L-homocysteine + H(+). Functionally, specifically methylates the N4 position of cytidine in position 1402 (C1402) of 16S rRNA. This Sphingopyxis alaskensis (strain DSM 13593 / LMG 18877 / RB2256) (Sphingomonas alaskensis) protein is Ribosomal RNA small subunit methyltransferase H.